Reading from the N-terminus, the 839-residue chain is Molybdenum cofactor sulfurase (839 aa).

At K237 the chain carries N6-(pyridoxal phosphate)lysine. The active site involves C401. Residues 651-662 are compositionally biased toward polar residues; the sequence is DQNYSQKQSPSM. The segment at 651–678 is disordered; that stretch reads DQNYSQKQSPSMPGSFPQAPSSPDPYPT. An MOSC domain is found at 656–834; the sequence is QKQSPSMPGS…IMVGDAVTPS (179 aa).

Belongs to the class-V pyridoxal-phosphate-dependent aminotransferase family. MOCOS subfamily. Requires pyridoxal 5'-phosphate as cofactor.

It catalyses the reaction Mo-molybdopterin + L-cysteine + AH2 = thio-Mo-molybdopterin + L-alanine + A + H2O. Its pathway is cofactor biosynthesis; molybdopterin biosynthesis. Its function is as follows. Sulfurates the molybdenum cofactor. Sulfation of molybdenum is essential for xanthine dehydrogenase (XDH) and aldehyde oxidase (ADO) enzymes in which molybdenum cofactor is liganded by 1 oxygen and 1 sulfur atom in active form. This Emericella nidulans (strain FGSC A4 / ATCC 38163 / CBS 112.46 / NRRL 194 / M139) (Aspergillus nidulans) protein is Molybdenum cofactor sulfurase.